The sequence spans 346 residues: Biotin synthase (346 aa).

Positions 38–256 (RQVQVSTLLS…IAVARIMMPT (219 aa)) constitute a Radical SAM core domain. [4Fe-4S] cluster is bound by residues C53, C57, and C60. Positions 97, 128, 188, and 260 each coordinate [2Fe-2S] cluster.

This sequence belongs to the radical SAM superfamily. Biotin synthase family. In terms of assembly, homodimer. Requires [4Fe-4S] cluster as cofactor. [2Fe-2S] cluster serves as cofactor.

The enzyme catalyses (4R,5S)-dethiobiotin + (sulfur carrier)-SH + 2 reduced [2Fe-2S]-[ferredoxin] + 2 S-adenosyl-L-methionine = (sulfur carrier)-H + biotin + 2 5'-deoxyadenosine + 2 L-methionine + 2 oxidized [2Fe-2S]-[ferredoxin]. Its pathway is cofactor biosynthesis; biotin biosynthesis; biotin from 7,8-diaminononanoate: step 2/2. Catalyzes the conversion of dethiobiotin (DTB) to biotin by the insertion of a sulfur atom into dethiobiotin via a radical-based mechanism. The chain is Biotin synthase from Escherichia coli (strain SE11).